Reading from the N-terminus, the 149-residue chain is Nucleoside diphosphate kinase (149 aa).

ATP is bound by residues Lys9, Phe57, Arg85, Thr91, Arg102, and Asn112. His115 serves as the catalytic Pros-phosphohistidine intermediate.

This sequence belongs to the NDK family. Homotetramer. It depends on Mg(2+) as a cofactor.

It is found in the cytoplasm. The enzyme catalyses a 2'-deoxyribonucleoside 5'-diphosphate + ATP = a 2'-deoxyribonucleoside 5'-triphosphate + ADP. The catalysed reaction is a ribonucleoside 5'-diphosphate + ATP = a ribonucleoside 5'-triphosphate + ADP. Its function is as follows. Major role in the synthesis of nucleoside triphosphates other than ATP. The ATP gamma phosphate is transferred to the NDP beta phosphate via a ping-pong mechanism, using a phosphorylated active-site intermediate. The chain is Nucleoside diphosphate kinase from Cyanothece sp. (strain PCC 7425 / ATCC 29141).